Consider the following 257-residue polypeptide: Snake venom serine protease nikobin (257 aa).

The signal sequence occupies residues 1–18 (MVLIRVLANLLLLQLSYA). The propeptide occupies 19-24 (QKSSEL). The 224-residue stretch at 25-248 (VIGGDECNIN…YSDWIQSIIA (224 aa)) folds into the Peptidase S1 domain. Disulfide bonds link Cys31–Cys162, Cys49–Cys65, Cys97–Cys255, Cys141–Cys209, Cys173–Cys188, and Cys199–Cys224. Catalysis depends on charge relay system residues His64 and Asp109. N-linked (GlcNAc...) asparagine glycosylation is found at Asn120 and Asn121. The active-site Charge relay system is the Ser203. Asn250 is a glycosylation site (N-linked (GlcNAc...) asparagine).

Belongs to the peptidase S1 family. Snake venom subfamily. As to quaternary structure, monomer. As to expression, expressed by the venom gland.

It is found in the secreted. Snake venom serine protease that may act in the hemostasis system of the prey. This is Snake venom serine protease nikobin (sp-VN) from Vipera nikolskii (Nikolsky's adder).